Consider the following 293-residue polypeptide: Cytochrome c biogenesis protein CcsA (293 aa).

Helical transmembrane passes span 12–32, 39–59, 78–98, 99–119, 142–162, 216–236, 250–267, and 273–293; these read INILAFLGALVSSLFYWAKLT, VFSLPKFCLIFSNCIIAGMLL, LFLSWVLNIITIIFVDKLSII, GAIGSSAVTLIIGYANYILPP, VMIFSYGLLIMGAFLSLIYVI, FISLGFISLTLGIISGSVWAN, TWALITWLVFATYLHIRI, and KIYASLVASLGLIVICFVTWE.

Belongs to the CcmF/CycK/Ccl1/NrfE/CcsA family. May interact with Ccs1.

It is found in the plastid. Its subcellular location is the chloroplast thylakoid membrane. Functionally, required during biogenesis of c-type cytochromes (cytochrome c6 and cytochrome f) at the step of heme attachment. This Cyanidium caldarium (Red alga) protein is Cytochrome c biogenesis protein CcsA.